A 614-amino-acid chain; its full sequence is Probable ATP-dependent RNA helicase DDX5 (614 aa).

The span at Met-1 to Gly-15 shows a compositional bias: basic and acidic residues. Positions Met-1–Glu-39 are disordered. Ser-24 is subject to Phosphoserine. N6-acetyllysine; alternate is present on Lys-32. Residue Lys-32 forms a Glycyl lysine isopeptide (Lys-Gly) (interchain with G-Cter in SUMO2); alternate linkage. Residues Lys-33 and Lys-40 each carry the N6-acetyllysine modification. Lys-45 participates in a covalent cross-link: Glycyl lysine isopeptide (Lys-Gly) (interchain with G-Cter in SUMO2). Lys-53 is covalently cross-linked (Glycyl lysine isopeptide (Lys-Gly) (interchain with G-Cter in SUMO2); alternate). Lys-53 participates in a covalent cross-link: Glycyl lysine isopeptide (Lys-Gly) (interchain with G-Cter in SUMO); alternate. Residue Lys-53 forms a Glycyl lysine isopeptide (Lys-Gly) (interchain with G-Cter in SUMO1); alternate linkage. Positions Leu-94–Ala-122 match the Q motif motif. ATP is bound by residues Phe-114–Glu-116, Gln-121, and Ala-138–Thr-145. Residues Trp-125 to Ile-300 form the Helicase ATP-binding domain. At Lys-236 the chain carries N6-acetyllysine. The DEAD box motif lies at Asp-248–Asp-251. Tyr-297 is modified (phosphotyrosine). Residues Lys-328–Val-475 enclose the Helicase C-terminal domain. Glycyl lysine isopeptide (Lys-Gly) (interchain with G-Cter in SUMO2) cross-links involve residues Lys-340, Lys-343, Lys-388, Lys-391, Lys-411, Lys-437, Lys-451, and Lys-470. The disordered stretch occupies residues Asp-477 to Gly-504. The transactivation domain stretch occupies residues Asp-477–Gln-614. Ser-480 bears the Phosphoserine mark. Residues Gly-488–Ser-498 are compositionally biased toward basic and acidic residues. Lys-523 participates in a covalent cross-link: Glycyl lysine isopeptide (Lys-Gly) (interchain with G-Cter in SUMO2).

It belongs to the DEAD box helicase family. DDX5/DBP2 subfamily. In terms of assembly, identified in the spliceosome C complex. Component of a ribonucleoprotein complex containing mRNAs and RNA-binding proteins including DDX5, HNRNPH2 and SRSF1 as well as splicing regulator ARVCF. Interacts with RBM4; the interaction occurs in an RNA-independent manner. Interacts with AGO1 and AGO2. Interacts with ESR1, AR, EP300, CREBBP, POLR2A, TP53, RUNX2 and HDAC1. Self-associates. Interacts with DDX17. Interacts with BRDT. The large PER complex involved in the repression of transcriptional termination is composed of at least PER2, CDK9, DDX5, DHX9, NCBP1 and POLR2A (active). Interacts with DHX36; this interaction occurs in a RNA-dependent manner. Interacts with NUPR1. Interacts with ERCC6. Interacts with DDX3X in the cytoplasm; this interaction may be more efficient when both proteins are unphosphorylated. In terms of processing, sumoylated; sumoylation, promoted by PIAS1, promotes interaction with HDAC1 and transcriptional repression activity. Sumoylation also significantly increases stability, and reduces polyubiquitination. Polyubiquitinated, leading to proteasomal degradation. Post-translationally, weakly phosphorylated in the G1/S phase of the cell cycle and much more at G2/M, especially at Thr and Tyr residues.

Its subcellular location is the nucleus. The protein localises to the nucleolus. The protein resides in the cytoplasm. The enzyme catalyses ATP + H2O = ADP + phosphate + H(+). Involved in the alternative regulation of pre-mRNA splicing; its RNA helicase activity is necessary for increasing tau exon 10 inclusion and occurs in a RBM4-dependent manner. Binds to the tau pre-mRNA in the stem-loop region downstream of exon 10. The rate of ATP hydrolysis is highly stimulated by single-stranded RNA. Involved in transcriptional regulation; the function is independent of the RNA helicase activity. Transcriptional coactivator for androgen receptor AR but probably not ESR1. Synergizes with DDX17 and SRA1 RNA to activate MYOD1 transcriptional activity and involved in skeletal muscle differentiation. Transcriptional coactivator for p53/TP53 and involved in p53/TP53 transcriptional response to DNA damage and p53/TP53-dependent apoptosis. Transcriptional coactivator for RUNX2 and involved in regulation of osteoblast differentiation. Acts as a transcriptional repressor in a promoter-specific manner; the function probably involves association with histone deacetylases, such as HDAC1. As component of a large PER complex is involved in the inhibition of 3' transcriptional termination of circadian target genes such as PER1 and NR1D1 and the control of the circadian rhythms. The polypeptide is Probable ATP-dependent RNA helicase DDX5 (Ddx5) (Mus musculus (Mouse)).